The following is a 254-amino-acid chain: Alcohol dehydrogenase (254 aa).

An NAD(+)-binding site is contributed by 10-33 (FVAGLGGIGLDTSRELVKRDLKNL). S138 provides a ligand contact to substrate. Y151 functions as the Proton acceptor in the catalytic mechanism.

This sequence belongs to the short-chain dehydrogenases/reductases (SDR) family. As to quaternary structure, homodimer.

It catalyses the reaction a primary alcohol + NAD(+) = an aldehyde + NADH + H(+). The catalysed reaction is a secondary alcohol + NAD(+) = a ketone + NADH + H(+). The protein is Alcohol dehydrogenase (Adh) of Drosophila madeirensis (Fruit fly).